A 727-amino-acid polypeptide reads, in one-letter code: AN1-type zinc finger protein 4 (727 aa).

The region spanning 28–103 (MELFIETLTG…LKLVLAMRGG (76 aa)) is the Ubiquitin-like domain. 2 disordered regions span residues 187–217 (HRMS…IIEN) and 238–264 (KKPK…TAPS). Residues 238-248 (KKPKKAVKIKP) are compositionally biased toward basic residues. The AN1-type zinc finger occupies 661–708 (KKTTNHCFLCGKKTGLASSYECRCGNNFCASHRYAETHGCTYDYKSAG). Positions 667, 670, 682, 684, 689, 692, 698, and 700 each coordinate Zn(2+).

The polypeptide is AN1-type zinc finger protein 4 (ZFAND4) (Homo sapiens (Human)).